A 510-amino-acid chain; its full sequence is Light-independent protochlorophyllide reductase subunit B (510 aa).

Asp-36 is a [4Fe-4S] cluster binding site. Catalysis depends on Asp-296, which acts as the Proton donor. 431–432 lines the substrate pocket; the sequence is GM.

It belongs to the ChlB/BchB/BchZ family. Protochlorophyllide reductase is composed of three subunits; ChlL, ChlN and ChlB. Forms a heterotetramer of two ChlB and two ChlN subunits. [4Fe-4S] cluster is required as a cofactor.

It localises to the plastid. It is found in the chloroplast. It carries out the reaction chlorophyllide a + oxidized 2[4Fe-4S]-[ferredoxin] + 2 ADP + 2 phosphate = protochlorophyllide a + reduced 2[4Fe-4S]-[ferredoxin] + 2 ATP + 2 H2O. The protein operates within porphyrin-containing compound metabolism; chlorophyll biosynthesis (light-independent). Functionally, component of the dark-operative protochlorophyllide reductase (DPOR) that uses Mg-ATP and reduced ferredoxin to reduce ring D of protochlorophyllide (Pchlide) to form chlorophyllide a (Chlide). This reaction is light-independent. The NB-protein (ChlN-ChlB) is the catalytic component of the complex. The chain is Light-independent protochlorophyllide reductase subunit B from Auxenochlorella protothecoides (Green microalga).